A 132-amino-acid chain; its full sequence is Keratin, high-sulfur matrix protein, IIIA3 (132 aa).

The keratin products of mammalian epidermal derivatives such as wool and hair consist of microfibrils embedded in a rigid matrix of other proteins. The matrix proteins include the high-sulfur and high-tyrosine keratins, having molecular weights of 6-20 kDa, whereas the microfibrils contain the larger, low-sulfur keratins (40-56 kDa). The protein is Keratin, high-sulfur matrix protein, IIIA3 of Capra hircus (Goat).